We begin with the raw amino-acid sequence, 88 residues long: Large ribosomal subunit protein bL31B (88 aa).

This sequence belongs to the bacterial ribosomal protein bL31 family. Type B subfamily. In terms of assembly, part of the 50S ribosomal subunit.

This chain is Large ribosomal subunit protein bL31B, found in Leuconostoc citreum (strain KM20).